The primary structure comprises 502 residues: Mannitol dehydrogenase 2 (502 aa).

This sequence belongs to the mannitol dehydrogenase family.

The catalysed reaction is D-mannitol + NAD(+) = D-fructose + NADH + H(+). Functionally, catalyzes the NAD(H)-dependent interconversion of D-fructose and D-mannitol in the mannitol metabolic pathway. The polypeptide is Mannitol dehydrogenase 2 (Saccharomyces cerevisiae (strain ATCC 204508 / S288c) (Baker's yeast)).